A 113-amino-acid polypeptide reads, in one-letter code: Large ribosomal subunit protein bL19 (113 aa).

The protein belongs to the bacterial ribosomal protein bL19 family.

This protein is located at the 30S-50S ribosomal subunit interface and may play a role in the structure and function of the aminoacyl-tRNA binding site. In Corynebacterium efficiens (strain DSM 44549 / YS-314 / AJ 12310 / JCM 11189 / NBRC 100395), this protein is Large ribosomal subunit protein bL19.